The primary structure comprises 127 residues: MSLLRNRLQDLPALCLCVLVLACIGACQSEAYEGTPSPPPKLKMSHWSLVTGRMKELLEPVLKRTRDRWQWFWSPSTFRGFMQTYYDDHLRDLGPRTKAWLLKSKESLLNKTHSLCPRIVCGDKDQG.

The N-terminal stretch at 1-27 (MSLLRNRLQDLPALCLCVLVLACIGAC) is a signal peptide.

It belongs to the apolipoprotein C4 family.

It is found in the secreted. In terms of biological role, may participate in lipoprotein metabolism. This chain is Apolipoprotein C-IV (APOC4), found in Papio anubis (Olive baboon).